Consider the following 525-residue polypeptide: Heat shock factor protein 1 (525 aa).

N-acetylmethionine is present on M1. Positions 15-120 (VPAFLTKLWT…LLENIKRKVT (106 aa)) are DNA-binding domain. K80 is modified (N6-acetyllysine). K91 bears the N6-acetyllysine; alternate mark. K91 is covalently cross-linked (Glycyl lysine isopeptide (Lys-Gly) (interchain with G-Cter in SUMO2); alternate). K118 is modified (N6-acetyllysine). S121 carries the phosphoserine; by MAPKAPK2 modification. Positions 130-203 (IKIRQDSVTK…ISLVQSNRIL (74 aa)) are hydrophobic repeat HR-A/B. K131 is covalently cross-linked (Glycyl lysine isopeptide (Lys-Gly) (interchain with G-Cter in SUMO2)). Position 142 is a phosphothreonine; by CK2 (T142). N6-acetyllysine is present on residues K150 and K188. A d domain region spans residues 203 to 224 (LGVKRKIPLMLNDGGPAHPMPK). K208 is subject to N6-acetyllysine; alternate. Residue K208 forms a Glycyl lysine isopeptide (Lys-Gly) (interchain with G-Cter in SUMO2); alternate linkage. Residues 221–310 (PMPKYGRQYS…PPSPPQSPRA (90 aa)) form a regulatory domain region. A Glycyl lysine isopeptide (Lys-Gly) (interchain with G-Cter in SUMO2) cross-link involves residue K224. S230 is subject to Phosphoserine; by CAMK2A. The tract at residues 266-365 (SDITELAPGS…RPPSPLPASA (100 aa)) is disordered. A compositionally biased stretch (low complexity) spans 272 to 283 (APGSPVASSGGS). A phosphoserine mark is found at S275 and S292. K298 is modified (N6-acetyllysine; alternate). K298 participates in a covalent cross-link: Glycyl lysine isopeptide (Lys-Gly) (interchain with G-Cter in SUMO2); alternate. K298 is covalently cross-linked (Glycyl lysine isopeptide (Lys-Gly) (interchain with G-Cter in SUMO); alternate). S303 bears the Phosphoserine; by GSK3-beta mark. S307 carries the post-translational modification Phosphoserine; by MAPK3. S314 and S319 each carry phosphoserine. At S320 the chain carries Phosphoserine; by PKA. T324 carries the phosphothreonine modification. Residue S327 is modified to Phosphoserine; by MAPK12. At S346 the chain carries Phosphoserine. Phosphoserine; by MAPK8 is present on S359. The interval 367–525 (EKCLSVACLD…PPKAKDPTVS (159 aa)) is transactivation domain. Positions 380-405 (LSDHLDAMDSNLDNLQTMLTSHGFSV) are hydrophobic repeat HR-C. The short motif at 408–416 (STLLDLFSP) is the 9aaTAD element. S415 carries the phosphoserine; by PLK1 modification. S440 is subject to Phosphoserine. The disordered stretch occupies residues 495–525 (YFSEGDDYSDDPTISLLTGSEPPKAKDPTVS). An N6-acetyllysine modification is found at K520.

It belongs to the HSF family. As to quaternary structure, monomer; cytoplasmic latent and transcriptionally inactive monomeric form in unstressed cells. Homotrimer; in response to stress, such as heat shock, homotrimerizes and translocates into the nucleus, binds to heat shock element (HSE) sequences in promoter of heat shock protein (HSP) genes and acquires transcriptional ability. Interacts (via monomeric form) with FKBP4; this interaction occurs in unstressed cells. Associates (via monomeric form) with HSP90 proteins in a multichaperone complex in unnstressed cell; this association maintains HSF1 in a non-DNA-binding and transcriptional inactive form by preventing HSF1 homotrimerization. Homotrimeric transactivation activity is modulated by protein-protein interactions and post-translational modifications. Interacts with HSP90AA1; this interaction is decreased in a IER5-dependent manner, promoting HSF1 accumulation in the nucleus, homotrimerization and DNA-binding activities. Part (via regulatory domain in the homotrimeric form) of a large heat shock-induced HSP90-dependent multichaperone complex at least composed of FKBP4, FKBP5, HSP90 proteins, PPID, PPP5C and PTGES3; this association maintains the HSF1 homotrimeric DNA-bound form in a transcriptionally inactive form. Interacts with BAG3 (via BAG domain); this interaction occurs in normal and heat-shocked cells promoting nuclear shuttling of HSF1 in a BAG3-dependent manner. Interacts (via homotrimeric and hyperphosphorylated form) with FKBP4; this interaction occurs upon heat shock in a HSP90-dependent multichaperone complex. Interacts (via homotrimeric form preferentially) with EEF1A proteins. In heat shocked cells, stress-denatured proteins compete with HSF1 homotrimeric DNA-bound form for association of the HSP90-dependent multichaperone complex, and hence alleviating repression of HSF1-mediated transcriptional activity. Interacts (via homotrimeric form preferentially) with DAXX; this interaction relieves homotrimeric HSF1 from repression of its transcriptional activity by HSP90-dependent multichaperone complex upon heat shock. Interacts (via D domain and preferentially with hyperphosphorylated form) with JNK1; this interaction occurs under both normal growth conditions and immediately upon heat shock. Interacts (via D domain and preferentially with hyperphosphorylated form) with MAPK3; this interaction occurs upon heat shock. Interacts with IER5 (via central region); this interaction promotes PPP2CA-induced dephosphorylation on Ser-121, Ser-307, Ser-314 and Thr-324 and HSF1 transactivation activity. Found in a ribonucleoprotein complex composed of the HSF1 homotrimeric form, translation elongation factor eEF1A proteins and non-coding RNA heat shock RNA-1 (HSR1); this complex occurs upon heat shock and stimulates HSF1 DNA-binding activity. Interacts (via transactivation domain) with HSPA1A/HSP70 and DNAJB1; these interactions result in the inhibition of heat shock- and HSF1-induced transcriptional activity during the attenuation and recovery phase from heat shock. Interacts (via Ser-303 and Ser-307 phosphorylated form) with YWHAE; this interaction promotes HSF1 sequestration in the cytoplasm in an ERK-dependent manner. Found in a complex with IER5 and PPP2CA. Interacts with TPR; this interaction increases upon heat shock and stimulates export of HSP70 mRNA. Interacts with SYMPK (via N-terminus) and CSTF2; these interactions occur upon heat shock. Interacts (via transactivation domain) with HSPA8. Interacts with EEF1D; this interaction occurs at heat shock promoter element (HSE) sequences. Interacts with MAPKAPK2. Interacts with PRKACA/PKA. Interacts (via transactivation domain) with GTF2A2. Interacts (via transactivation domain) with GTF2B. Interacts (via transactivation domain) with TBP. Interacts with CDK9, CCNT1 and EP300. Interacts (via N-terminus) with XRCC5 (via N-terminus) and XRCC6 (via N-terminus); these interactions are direct and prevent XRCC5/XRCC6 heterodimeric binding and non-homologous end joining (NHEJ) repair activities induced by ionizing radiation (IR). Interacts with PLK1; this interaction occurs during the early mitotic period, increases upon heat shock but does not modulate neither HSF1 homotrimerization and DNA-binding activities. Interacts with CDC20; this interaction occurs in mitosis in a MAD2L1-dependent manner and prevents PLK1-stimulated degradation of HSF1 by blocking the recruitment of the SCF(BTRC) ubiquitin ligase complex. Interacts with MAD2L1; this interaction occurs in mitosis. Interacts with BTRC; this interaction occurs during mitosis, induces its ubiquitin-dependent degradation following stimulus-dependent phosphorylation, a process inhibited by CDC20. Interacts with HSP90AA1 and HSP90AB1. Forms a complex with TTC5/STRAP and p300/EP300; these interactions augment chromatin-bound HSF1 and p300/EP300 histone acetyltransferase activity. Phosphorylated. Phosphorylated in unstressed cells; this phosphorylation is constitutive and implicated in the repression of HSF1 transcriptional activity. Phosphorylated on Ser-121 by MAPKAPK2; this phosphorylation promotes interaction with HSP90 proteins and inhibits HSF1 homotrimerization, DNA-binding and transactivation activities. Phosphorylation on Ser-303 by GSK3B/GSK3-beta and on Ser-307 by MAPK3 within the regulatory domain is involved in the repression of HSF1 transcriptional activity and occurs in a RAF1-dependent manner. Phosphorylation on Ser-303 and Ser-307 increases HSF1 nuclear export in a YWHAE- and XPO1/CRM1-dependent manner. Phosphorylation on Ser-307 is a prerequisite for phosphorylation on Ser-303. According to, Ser-303 is not phosphorylated in unstressed cells. Phosphorylated on Ser-415 by PLK1; phosphorylation promotes nuclear translocation upon heat shock. Hyperphosphorylated upon heat shock and during the attenuation and recovery phase period of the heat shock response. Phosphorylated on Thr-142; this phosphorylation increases HSF1 transactivation activity upon heat shock. Phosphorylation on Ser-230 by CAMK2A; this phosphorylation enhances HSF1 transactivation activity upon heat shock. Phosphorylation on Ser-327 by MAPK12; this phosphorylation enhances HSF1 nuclear translocation, homotrimerization and transactivation activities upon heat shock. Phosphorylated on Ser-320 by PRKACA/PKA; this phosphorylation promotes nuclear localization and transcriptional activity upon heat shock. Phosphorylated on Ser-359 by MAPK8; this phosphorylation occurs upon heat shock, induces HSF1 translocation into nuclear stress bodies and negatively regulates transactivation activity. Neither basal nor stress-inducible phosphorylation on Ser-230, Ser-292, Ser-303, Ser-307, Ser-314, Ser-319, Ser-320, Thr-324, Ser-327, Ser-339, Ser-346, Ser-359 and Ser-364 within the regulatory domain is involved in the regulation of HSF1 subcellular localization or DNA-binding activity; however, it negatively regulates HSF1 transactivation activity. Phosphorylated by PLK1 in the early mitotic period; this phosphorylation regulates HSF1 localization to the spindle pole, the recruitment of the SCF(BTRC) ubiquitin ligase complex inducing HSF1 degradation, and hence mitotic progression. Dephosphorylated on Ser-121, Ser-307, Ser-314, Thr-324 by phosphatase PPP2CA in an IER5-dependent manner, leading to HSF1-mediated transactivation activity. In terms of processing, sumoylated with SUMO1 and SUMO2 upon heat shock in a ERK2-dependent manner. Sumoylated by SUMO1 on Lys-298; sumoylation occurs upon heat shock and promotes its localization to nuclear stress bodies and DNA-binding activity. Phosphorylation on Ser-303 and Ser-307 is probably a prerequisite for sumoylation. Post-translationally, acetylated on Lys-118; this acetylation is decreased in a IER5-dependent manner. Acetylated on Lys-118, Lys-208 and Lys-298; these acetylations occur in a EP300-dependent manner. Acetylated on Lys-80; this acetylation inhibits DNA-binding activity upon heat shock. Deacetylated on Lys-80 by SIRT1; this deacetylation increases DNA-binding activity. Ubiquitinated by SCF(BTRC) and degraded following stimulus-dependent phosphorylation by PLK1 in mitosis. Polyubiquitinated. Undergoes proteasomal degradation upon heat shock and during the attenuation and recovery phase period of the heat shock response.

It localises to the nucleus. Its subcellular location is the cytoplasm. The protein resides in the nucleoplasm. It is found in the perinuclear region. The protein localises to the cytoskeleton. It localises to the spindle pole. Its subcellular location is the microtubule organizing center. The protein resides in the centrosome. It is found in the chromosome. The protein localises to the centromere. It localises to the kinetochore. Functionally, functions as a stress-inducible and DNA-binding transcription factor that plays a central role in the transcriptional activation of the heat shock response (HSR), leading to the expression of a large class of molecular chaperones, heat shock proteins (HSPs), that protect cells from cellular insult damage. In unstressed cells, is present in a HSP90-containing multichaperone complex that maintains it in a non-DNA-binding inactivated monomeric form. Upon exposure to heat and other stress stimuli, undergoes homotrimerization and activates HSP gene transcription through binding to site-specific heat shock elements (HSEs) present in the promoter regions of HSP genes. Upon heat shock stress, forms a chromatin-associated complex with TTC5/STRAP and p300/EP300 to stimulate HSR transcription, therefore increasing cell survival. Activation is reversible, and during the attenuation and recovery phase period of the HSR, returns to its unactivated form. Binds to inverted 5'-NGAAN-3' pentamer DNA sequences. Binds to chromatin at heat shock gene promoters. Activates transcription of transcription factor FOXR1 which in turn activates transcription of the heat shock chaperones HSPA1A and HSPA6 and the antioxidant NADPH-dependent reductase DHRS2. Also serves several other functions independently of its transcriptional activity. Involved in the repression of Ras-induced transcriptional activation of the c-fos gene in heat-stressed cells. Positively regulates pre-mRNA 3'-end processing and polyadenylation of HSP70 mRNA upon heat-stressed cells in a symplekin (SYMPK)-dependent manner. Plays a role in nuclear export of stress-induced HSP70 mRNA. Plays a role in the regulation of mitotic progression. Also plays a role as a negative regulator of non-homologous end joining (NHEJ) repair activity in a DNA damage-dependent manner. Involved in stress-induced cancer cell proliferation in a IER5-dependent manner. The chain is Heat shock factor protein 1 from Bos taurus (Bovine).